Consider the following 462-residue polypeptide: Cysteine--tRNA ligase (462 aa).

Residue C27 participates in Zn(2+) binding. Positions P29 to N39 match the 'HIGH' region motif. Zn(2+)-binding residues include C211, H236, and E240. Positions K270–S274 match the 'KMSKS' region motif. Residue K273 participates in ATP binding.

Belongs to the class-I aminoacyl-tRNA synthetase family. As to quaternary structure, monomer. It depends on Zn(2+) as a cofactor.

It is found in the cytoplasm. It carries out the reaction tRNA(Cys) + L-cysteine + ATP = L-cysteinyl-tRNA(Cys) + AMP + diphosphate. This is Cysteine--tRNA ligase from Anaplasma phagocytophilum (strain HZ).